The following is a 750-amino-acid chain: Neprilysin (750 aa).

Glycine 2 carries N-myristoyl glycine lipidation. The Cytoplasmic portion of the chain corresponds to 2 to 28 (GRSESQMDITDINAPKPKKKQRWTPLE). Serine 4 and serine 6 each carry phosphoserine. Positions 16–23 (PKPKKKQR) match the Stop-transfer sequence motif. Residues 29–51 (ISLSVLVLLLTIIAVTMIALYAT) traverse the membrane as a helical; Signal-anchor for type II membrane protein segment. The Extracellular portion of the chain corresponds to 52-750 (YDDGICKSSD…MNPERKCRVW (699 aa)). A Peptidase M13 domain is found at 56–750 (ICKSSDCIKS…MNPERKCRVW (695 aa)). 6 disulfide bridges follow: cysteine 57–cysteine 62, cysteine 80–cysteine 735, cysteine 88–cysteine 695, cysteine 143–cysteine 411, cysteine 234–cysteine 242, and cysteine 621–cysteine 747. Residue arginine 103 participates in a peptide binding. Residues asparagine 145 and asparagine 211 are each glycosylated (N-linked (GlcNAc...) asparagine). Asparagine 285, asparagine 311, and asparagine 325 each carry an N-linked (GlcNAc...) asparagine glycan. Histidine 584 lines the Zn(2+) pocket. Glutamate 585 is a catalytic residue. Histidine 588 is a Zn(2+) binding site. Asparagine 628 carries N-linked (GlcNAc...) asparagine glycosylation. Position 647 (glutamate 647) interacts with Zn(2+). Aspartate 651 (proton donor) is an active-site residue.

This sequence belongs to the peptidase M13 family. Zn(2+) serves as cofactor. Post-translationally, myristoylation is a determinant of membrane targeting. Glycosylation at Asn-628 is necessary both for surface expression and neutral endopeptidase activity.

The protein localises to the cell membrane. The enzyme catalyses Preferential cleavage of polypeptides between hydrophobic residues, particularly with Phe or Tyr at P1'.. It carries out the reaction substance P + H2O = substance P(1-9) + L-Leu-L-Met-NH2. It catalyses the reaction substance P + H2O = substance P(1-7) + L-Phe-Gly-L-Leu-L-Met-NH2. The catalysed reaction is neurotensin + H2O = neurotensin(1-11) + L-isoleucyl-L-leucine. The enzyme catalyses neurotensin + H2O = neurotensin(1-10) + L-tyrosyl-L-isoleucyl-L-leucine. Functionally, thermolysin-like specificity, but is almost confined on acting on polypeptides of up to 30 amino acids. Biologically important in the destruction of opioid peptides such as Met- and Leu-enkephalins by cleavage of a Gly-Phe bond. Catalyzes cleavage of bradykinin, substance P and neurotensin peptides. Able to cleave angiotensin-1, angiotensin-2 and angiotensin 1-9. Involved in the degradation of the atrial natriuretic factor (ANF). Displays UV-inducible elastase activity toward skin preelastic and elastic fibers. The protein is Neprilysin of Mus musculus (Mouse).